The sequence spans 324 residues: Dolichyl-phosphate beta-glucosyltransferase (324 aa).

The Lumenal portion of the chain corresponds to 1–7 (MAPLLLQ). A helical; Signal-anchor for type II membrane protein transmembrane segment spans residues 8 to 28 (LAVLGAALAAAALVLISIVAF). Topologically, residues 29–324 (TTATKMPALH…WRLEQTRKMN (296 aa)) are cytoplasmic.

The protein belongs to the glycosyltransferase 2 family. Expressed in pancreas, placenta, liver, heart, brain, kidney, skeletal muscle, and lung.

It localises to the endoplasmic reticulum membrane. The catalysed reaction is a di-trans,poly-cis-dolichyl phosphate + UDP-alpha-D-glucose = a di-trans,poly-cis-dolichyl beta-D-glucosyl phosphate + UDP. It participates in protein modification; protein glycosylation. In terms of biological role, dolichyl-phosphate beta-glucosyltransferase that operates in the biosynthetic pathway of dolichol-linked oligosaccharides, the glycan precursors employed in protein asparagine (N)-glycosylation. The assembly of dolichol-linked oligosaccharides begins on the cytosolic side of the endoplasmic reticulum membrane and finishes in its lumen. The sequential addition of sugars to dolichol pyrophosphate produces dolichol-linked oligosaccharides containing fourteen sugars, including two GlcNAcs, nine mannoses and three glucoses. Once assembled, the oligosaccharide is transferred from the lipid to nascent proteins by oligosaccharyltransferases. Dolichyl-phosphate beta-glucosyltransferase produces dolichyl beta-D-glucosyl phosphate/Dol-P-Glc, the glucose donor substrate used sequentially by ALG6, ALG8 and ALG10 to add glucose residues on top of the Man(9)GlcNAc(2)-PP-Dol structure. These are the three last steps in the biosynthetic pathway of dolichol-linked oligosaccharides to produce Glc(3)Man(9)GlcNAc(2)-PP-Dol. The enzyme is most probably active on the cytoplasmic side of the endoplasmic reticulum while its product Dol-P-Glc is the substrate for ALG6, ALG8 and ALG11 in the lumen of the endoplasmic reticulum. This Homo sapiens (Human) protein is Dolichyl-phosphate beta-glucosyltransferase.